The primary structure comprises 105 residues: uncharacterized protein (105 aa).

This is an uncharacterized protein from Mycobacterium bovis (strain ATCC BAA-935 / AF2122/97).